The primary structure comprises 155 residues: 6,7-dimethyl-8-ribityllumazine synthase (155 aa).

5-amino-6-(D-ribitylamino)uracil is bound by residues Phe-24, 58 to 60 (AFE), and 82 to 84 (VII). 87-88 (ST) contributes to the (2S)-2-hydroxy-3-oxobutyl phosphate binding site. His-90 (proton donor) is an active-site residue. Phe-115 provides a ligand contact to 5-amino-6-(D-ribitylamino)uracil. Position 129 (Arg-129) interacts with (2S)-2-hydroxy-3-oxobutyl phosphate.

Belongs to the DMRL synthase family.

It carries out the reaction (2S)-2-hydroxy-3-oxobutyl phosphate + 5-amino-6-(D-ribitylamino)uracil = 6,7-dimethyl-8-(1-D-ribityl)lumazine + phosphate + 2 H2O + H(+). It participates in cofactor biosynthesis; riboflavin biosynthesis; riboflavin from 2-hydroxy-3-oxobutyl phosphate and 5-amino-6-(D-ribitylamino)uracil: step 1/2. Catalyzes the formation of 6,7-dimethyl-8-ribityllumazine by condensation of 5-amino-6-(D-ribitylamino)uracil with 3,4-dihydroxy-2-butanone 4-phosphate. This is the penultimate step in the biosynthesis of riboflavin. In Chlorobium chlorochromatii (strain CaD3), this protein is 6,7-dimethyl-8-ribityllumazine synthase.